The following is a 1003-amino-acid chain: Translation initiation factor IF-2 (1003 aa).

Basic and acidic residues-rich tracts occupy residues glutamate 61 to lysine 74, proline 139 to glutamate 169, leucine 180 to proline 206, valine 219 to serine 229, and serine 252 to serine 290. Disordered regions lie at residues glutamate 61–glycine 81 and proline 135–phenylalanine 362. Positions asparagine 315–asparagine 350 are enriched in low complexity. A tr-type G domain is found at proline 502–lysine 672. Positions glycine 511–threonine 518 are G1. Glycine 511–threonine 518 is a binding site for GTP. The interval glycine 536–histidine 540 is G2. The segment at aspartate 558 to glycine 561 is G3. GTP is bound by residues aspartate 558–histidine 562 and asparagine 612–aspartate 615. The G4 stretch occupies residues asparagine 612–aspartate 615. The G5 stretch occupies residues serine 648–lysine 650.

This sequence belongs to the TRAFAC class translation factor GTPase superfamily. Classic translation factor GTPase family. IF-2 subfamily.

It localises to the cytoplasm. Its function is as follows. One of the essential components for the initiation of protein synthesis. Protects formylmethionyl-tRNA from spontaneous hydrolysis and promotes its binding to the 30S ribosomal subunits. Also involved in the hydrolysis of GTP during the formation of the 70S ribosomal complex. The polypeptide is Translation initiation factor IF-2 (Phocaeicola vulgatus (strain ATCC 8482 / DSM 1447 / JCM 5826 / CCUG 4940 / NBRC 14291 / NCTC 11154) (Bacteroides vulgatus)).